The following is a 138-amino-acid chain: Transcriptional activator protein (138 aa).

The segment covering 1-20 (MTGSKKTPSTSPSKKLSSPP) has biased composition (low complexity). Positions 1 to 23 (MTGSKKTPSTSPSKKLSSPPEVK) are disordered. The Nuclear localization signal motif lies at 23–37 (KLRHRFAKRQIRRRR). A zinc finger spans residues 42–59 (CGCSIYIHINCVNNGFTH). Over residues 85 to 106 (NTASGDANVHTQPGISHSSQSK) the composition is skewed to polar residues. Positions 85-123 (NTASGDANVHTQPGISHSSQSKPQHEDSVGSPQSLLQLP) are disordered. A compositionally biased stretch (low complexity) spans 113 to 123 (VGSPQSLLQLP). The interval 124–138 (SLDDVDDDFWADLLK) is transactivation.

Belongs to the geminiviridae transcriptional activator protein family. As to quaternary structure, monomer. Homodimer. Homooligomer. Self-interaction correlates with nuclear localization and efficient activation of transcription. Monomers suppress local silencing by interacting with and inactivating host adenosine kinase 2 (ADK2) in the cytoplasm. Interacts with and inhibits host SNF1 kinase. Binds to ssDNA. In terms of processing, phosphorylated.

It is found in the host nucleus. The protein resides in the host cytoplasm. Its function is as follows. Strong activator of the late viral genes promoters. Enhances the expression of the capsid protein and nuclear shuttle protein. Acts as a suppressor of RNA-mediated gene silencing, also known as post-transcriptional gene silencing (PTGS), a mechanism of plant viral defense that limits the accumulation of viral RNAs. Suppresses the host RNA silencing by inhibiting adenosine kinase 2 (ADK2), a kinase involved in a general methylation pathway. Also suppresses the host basal defense by interacting with and inhibiting SNF1 kinase, a key regulator of cell metabolism implicated in innate antiviral defense. Determines pathogenicity. In Pepper huasteco yellow vein virus (PHYVV), this protein is Transcriptional activator protein.